Here is a 299-residue protein sequence, read N- to C-terminus: ATP synthase gamma chain (299 aa).

Belongs to the ATPase gamma chain family. As to quaternary structure, F-type ATPases have 2 components, CF(1) - the catalytic core - and CF(0) - the membrane proton channel. CF(1) has five subunits: alpha(3), beta(3), gamma(1), delta(1), epsilon(1). CF(0) has three main subunits: a, b and c.

The protein resides in the cell membrane. Produces ATP from ADP in the presence of a proton gradient across the membrane. The gamma chain is believed to be important in regulating ATPase activity and the flow of protons through the CF(0) complex. This chain is ATP synthase gamma chain, found in Leifsonia xyli subsp. xyli (strain CTCB07).